The primary structure comprises 428 residues: MARSLCAGAWLRKPHYLQARLSYMRVKYLFFSWLVVFVGSWIIYVQYSTYTELCRGKDCKKIICDKYKTGVIDGPACNSLCVTETLYFGKCLSNKPSNQMYLGVWDNLPGVVKCQMEQALHLDFGTELEPRKEIVLFDKPTRGTTVQKFKEMVYSLFKAKLGDQGNLSELVNLILTVADGDRDGQVSLGEAKSAWALLQLNEFLLMVILQDKEHTPKLMGFCGDLYVMESVEYTSLYGISLPWVMELFIPSGFRRSMDQLFTPSWPRKAKIAIGLLEFVEDVFHGPYGNFLMCDTSAKNLGYNEKYDLKMVDMRKIVPETNLKELIKDRHCESDLDCVYGTDCRTSCDLSTMKCTSEVIQPNLAKACQLLKDYLLHGAPSEIREELEKQLYSCIALKVTANQMEMEHSLILNNLKTLLWKKISYTNDS.

Over 1–27 (MARSLCAGAWLRKPHYLQARLSYMRVK) the chain is Cytoplasmic. The helical transmembrane segment at 28-48 (YLFFSWLVVFVGSWIIYVQYS) threads the bilayer. Residues 49-428 (TYTELCRGKD…WKKISYTNDS (380 aa)) are Lumenal-facing.

This sequence belongs to the DIPK family. Among the many cysteines in the lumenal domain, most are probably involved in disulfide bonds. As to expression, ubiquitous.

It localises to the endoplasmic reticulum membrane. In Mus musculus (Mouse), this protein is Divergent protein kinase domain 1A (Dipk1a).